Here is a 416-residue protein sequence, read N- to C-terminus: D-amino acid dehydrogenase (416 aa).

Residue 3-17 (ITILGSGVIGVTTAY) participates in FAD binding.

The protein belongs to the DadA oxidoreductase family. The cofactor is FAD.

The catalysed reaction is a D-alpha-amino acid + A + H2O = a 2-oxocarboxylate + AH2 + NH4(+). The protein operates within amino-acid degradation; D-alanine degradation; NH(3) and pyruvate from D-alanine: step 1/1. Oxidative deamination of D-amino acids. This is D-amino acid dehydrogenase from Brucella abortus (strain S19).